An 84-amino-acid chain; its full sequence is NAD(P)H-quinone oxidoreductase subunit O (84 aa).

It belongs to the complex I NdhO subunit family. In terms of assembly, NDH-1 can be composed of about 15 different subunits; different subcomplexes with different compositions have been identified which probably have different functions.

Its subcellular location is the cellular thylakoid membrane. It carries out the reaction a plastoquinone + NADH + (n+1) H(+)(in) = a plastoquinol + NAD(+) + n H(+)(out). The catalysed reaction is a plastoquinone + NADPH + (n+1) H(+)(in) = a plastoquinol + NADP(+) + n H(+)(out). Functionally, NDH-1 shuttles electrons from an unknown electron donor, via FMN and iron-sulfur (Fe-S) centers, to quinones in the respiratory and/or the photosynthetic chain. The immediate electron acceptor for the enzyme in this species is believed to be plastoquinone. Couples the redox reaction to proton translocation, and thus conserves the redox energy in a proton gradient. Cyanobacterial NDH-1 also plays a role in inorganic carbon-concentration. The protein is NAD(P)H-quinone oxidoreductase subunit O of Synechococcus sp. (strain CC9605).